The following is a 365-amino-acid chain: Peptide chain release factor 2 (365 aa).

Q252 bears the N5-methylglutamine mark.

The protein belongs to the prokaryotic/mitochondrial release factor family. Post-translationally, methylated by PrmC. Methylation increases the termination efficiency of RF2.

It localises to the cytoplasm. In terms of biological role, peptide chain release factor 2 directs the termination of translation in response to the peptide chain termination codons UGA and UAA. The polypeptide is Peptide chain release factor 2 (Shewanella woodyi (strain ATCC 51908 / MS32)).